Consider the following 132-residue polypeptide: ATP synthase epsilon chain (132 aa).

This sequence belongs to the ATPase epsilon chain family. As to quaternary structure, F-type ATPases have 2 components, CF(1) - the catalytic core - and CF(0) - the membrane proton channel. CF(1) has five subunits: alpha(3), beta(3), gamma(1), delta(1), epsilon(1). CF(0) has three main subunits: a, b and c.

The protein localises to the cell inner membrane. Its function is as follows. Produces ATP from ADP in the presence of a proton gradient across the membrane. The polypeptide is ATP synthase epsilon chain (atpC) (Aquifex aeolicus (strain VF5)).